The sequence spans 314 residues: tRNA-cytidine(32) 2-sulfurtransferase (314 aa).

Positions Ser49–Ser54 match the PP-loop motif motif. [4Fe-4S] cluster contacts are provided by Cys124, Cys127, and Cys215.

The protein belongs to the TtcA family. Homodimer. The cofactor is Mg(2+). It depends on [4Fe-4S] cluster as a cofactor.

The protein resides in the cytoplasm. It carries out the reaction cytidine(32) in tRNA + S-sulfanyl-L-cysteinyl-[cysteine desulfurase] + AH2 + ATP = 2-thiocytidine(32) in tRNA + L-cysteinyl-[cysteine desulfurase] + A + AMP + diphosphate + H(+). It participates in tRNA modification. Functionally, catalyzes the ATP-dependent 2-thiolation of cytidine in position 32 of tRNA, to form 2-thiocytidine (s(2)C32). The sulfur atoms are provided by the cysteine/cysteine desulfurase (IscS) system. The chain is tRNA-cytidine(32) 2-sulfurtransferase from Pasteurella multocida (strain Pm70).